A 301-amino-acid polypeptide reads, in one-letter code: MHVLRTPDSRFENLEDYPFVAHYLDVTARDTRPLRMHYLDEGPIDGPPIVLLHGEPTWSYLYRTMITPLTDAGNRVLAPDLIGFGRSDKPSRIEDYSYQRHVDWVVSWFEHLNLSDVTLFVQDWGSLIGLRIAAEQPDRVGRLVVANGFLPTAQRRTPPAFYAWRAFARYSPVLPAGRIVSVGTVRRVSSKVRAGYDAPFPDKTYQAGARAFPQLVPTSPADPAIPANRKAWEALGRWEKPFLAIFGARDPILGHADSPLIKHIPGAAGQPHARINASHFIQEDRGPELAERILSWQQALL.

Residues 47–284 form the AB hydrolase-1 domain; sequence PPIVLLHGEP…INASHFIQED (238 aa). Asp123 serves as the catalytic Nucleophile. Asp250 (proton donor) is an active-site residue. Catalysis depends on His279, which acts as the Proton acceptor.

This sequence belongs to the haloalkane dehalogenase family. Type 1 subfamily. Monomer.

It catalyses the reaction 1-haloalkane + H2O = a halide anion + a primary alcohol + H(+). In terms of biological role, catalyzes hydrolytic cleavage of carbon-halogen bonds in halogenated aliphatic compounds, leading to the formation of the corresponding primary alcohols, halide ions and protons. The sequence is that of Haloalkane dehalogenase from Mycolicibacterium paratuberculosis (strain ATCC BAA-968 / K-10) (Mycobacterium paratuberculosis).